A 461-amino-acid polypeptide reads, in one-letter code: Ribulose bisphosphate carboxylase (461 aa).

A substrate-binding site is contributed by Asn112. The active-site Proton acceptor is Lys167. Substrate is bound at residue Lys169. 3 residues coordinate Mg(2+): Lys192, Asp194, and Glu195. Lys192 bears the N6-carboxylysine mark. Residue His288 is the Proton acceptor of the active site. Residues Arg289, His322, and Ser369 each coordinate substrate.

It belongs to the RuBisCO large chain family. Type II subfamily. As to quaternary structure, homodimer. Mg(2+) serves as cofactor.

The catalysed reaction is 2 (2R)-3-phosphoglycerate + 2 H(+) = D-ribulose 1,5-bisphosphate + CO2 + H2O. It catalyses the reaction D-ribulose 1,5-bisphosphate + O2 = 2-phosphoglycolate + (2R)-3-phosphoglycerate + 2 H(+). RuBisCO catalyzes two reactions: the carboxylation of D-ribulose 1,5-bisphosphate, the primary event in carbon dioxide fixation, as well as the oxidative fragmentation of the pentose substrate. Both reactions occur simultaneously and in competition at the same active site. The protein is Ribulose bisphosphate carboxylase of Rhodopseudomonas palustris (strain HaA2).